Consider the following 335-residue polypeptide: DNA-directed RNA polymerase subunit alpha (335 aa).

An alpha N-terminal domain (alpha-NTD) region spans residues 1-233; the sequence is MIRDKISVSI…DLFIPFLHGE (233 aa). The interval 264 to 335 is alpha C-terminal domain (alpha-CTD); that stretch reads KEKIAFKHIF…KRFAIDPPRN (72 aa).

The protein belongs to the RNA polymerase alpha chain family. As to quaternary structure, in plastids the minimal PEP RNA polymerase catalytic core is composed of four subunits: alpha, beta, beta', and beta''. When a (nuclear-encoded) sigma factor is associated with the core the holoenzyme is formed, which can initiate transcription.

It localises to the plastid. The protein localises to the chloroplast. The catalysed reaction is RNA(n) + a ribonucleoside 5'-triphosphate = RNA(n+1) + diphosphate. Its function is as follows. DNA-dependent RNA polymerase catalyzes the transcription of DNA into RNA using the four ribonucleoside triphosphates as substrates. In Pinus koraiensis (Korean pine), this protein is DNA-directed RNA polymerase subunit alpha.